We begin with the raw amino-acid sequence, 122 residues long: MIHPETNLDVADNSGARQVQCIKVLGGSKRKTASVGDVIVVSVKEAIPRGKVKKGDVHQAVIVRTSYPVRRADGSAIRFDRNAAVLINKQQEPIGTRIFGPVVRELRARKFMKIISLAPEVL.

Belongs to the universal ribosomal protein uL14 family. Part of the 50S ribosomal subunit. Forms a cluster with proteins L3 and L19. In the 70S ribosome, L14 and L19 interact and together make contacts with the 16S rRNA in bridges B5 and B8.

Functionally, binds to 23S rRNA. Forms part of two intersubunit bridges in the 70S ribosome. The polypeptide is Large ribosomal subunit protein uL14 (Gluconacetobacter diazotrophicus (strain ATCC 49037 / DSM 5601 / CCUG 37298 / CIP 103539 / LMG 7603 / PAl5)).